Reading from the N-terminus, the 378-residue chain is Ribosomal RNA large subunit methyltransferase G (378 aa).

The protein belongs to the methyltransferase superfamily. RlmG family.

The protein resides in the cytoplasm. The catalysed reaction is guanosine(1835) in 23S rRNA + S-adenosyl-L-methionine = N(2)-methylguanosine(1835) in 23S rRNA + S-adenosyl-L-homocysteine + H(+). Its function is as follows. Specifically methylates the guanine in position 1835 (m2G1835) of 23S rRNA. This Shigella dysenteriae serotype 1 (strain Sd197) protein is Ribosomal RNA large subunit methyltransferase G.